We begin with the raw amino-acid sequence, 305 residues long: NADH-cytochrome b5 reductase 1 (305 aa).

A helical transmembrane segment spans residues valine 8–tyrosine 28. The region spanning aspartate 44–alanine 156 is the FAD-binding FR-type domain. FAD-binding positions include aspartate 136–asparagine 166 and valine 175–leucine 210.

It belongs to the flavoprotein pyridine nucleotide cytochrome reductase family. Requires FAD as cofactor.

Its subcellular location is the membrane. It carries out the reaction 2 Fe(III)-[cytochrome b5] + NADH = 2 Fe(II)-[cytochrome b5] + NAD(+) + H(+). Its function is as follows. NADH-cytochrome b5 reductases are involved in desaturation and elongation of fatty acids, cholesterol biosynthesis, drug metabolism, and, in erythrocyte, methemoglobin reduction. The sequence is that of NADH-cytochrome b5 reductase 1 (Cyb5r1) from Rattus norvegicus (Rat).